Reading from the N-terminus, the 502-residue chain is Dipeptide and tripeptide permease A (502 aa).

Residues 1 to 35 (MSTANNKPTDESVSLNAFKQPKAFYLIFSIELWER) are Cytoplasmic-facing. The helical transmembrane segment at 36 to 56 (FGFYGLQGIMAVYLVKQLGMS) threads the bilayer. Over 57-60 (EADS) the chain is Periplasmic. The chain crosses the membrane as a helical span at residues 61-81 (ITLFSSFSALVYGLVAVGGWL). Over 82–90 (GDKVLGTKR) the chain is Cytoplasmic. The helical transmembrane segment at 91–111 (VIMLGAVVLAIGYGLVAWSGH) threads the bilayer. Residue Asp-112 is a topological domain, periplasmic. A helical membrane pass occupies residues 113 to 133 (AAVVYMGMATIAVGNGLFKAN). At 134 to 154 (PSSLLSTCYNKDDPRLDGAFT) the chain is on the cytoplasmic side. Residues 155–175 (MYYMSINIGSFFSMLATPWLA) form a helical membrane-spanning segment. Residues 176–179 (AKFG) lie on the Periplasmic side of the membrane. A helical transmembrane segment spans residues 180-200 (WSVAFALSFVGMLITVVNFLF). Over 201 to 218 (CRSWVKNYGSKPDFEPVH) the chain is Cytoplasmic. A helical transmembrane segment spans residues 219-239 (IGKLLATIVGVVILATIATWL). Over 240–247 (LHNQGVAR) the chain is Periplasmic. The chain crosses the membrane as a helical span at residues 248-268 (AVLGVVALGIICIFAKEAFAM). Residues 269–275 (QGAARRK) are Cytoplasmic-facing. The chain crosses the membrane as a helical span at residues 276 to 296 (MIVAFILMLQAVVFFVLYSQM). Residues 297-321 (PTSLNFFAIRNVEHSILSIAFEPEQ) are Periplasmic-facing. A helical membrane pass occupies residues 322–342 (FQALNPFWIMIGSPILAAIYN). The Cytoplasmic portion of the chain corresponds to 343–353 (KMGDRLPMPHK). The chain crosses the membrane as a helical span at residues 354–374 (FAIGMVLCSGAFLVLPLGTKF). At 375–384 (ATDAGIVSVN) the chain is on the periplasmic side. Residues 385–405 (WLILSYALQSIGELMISGLGL) form a helical membrane-spanning segment. The Cytoplasmic segment spans residues 406–415 (AMVAQLVPQR). A helical membrane pass occupies residues 416–436 (LMGFIMGSWFLTTAGAALIAG). Over 437-460 (KIANLMAVPENVTDPLVSLEVYGR) the chain is Periplasmic. Residues 461–481 (VFMQIGIATAVIAVLMLLTAP) traverse the membrane as a helical segment. Residues 482-502 (KLNRMTLEDDKAAKATDTATA) lie on the Cytoplasmic side of the membrane.

The protein belongs to the major facilitator superfamily. Proton-dependent oligopeptide transporter (POT/PTR) (TC 2.A.17) family. DtpA subfamily.

It is found in the cell inner membrane. Its function is as follows. Proton-dependent permease that transports di- and tripeptides. The chain is Dipeptide and tripeptide permease A from Enterobacter sp. (strain 638).